The primary structure comprises 211 residues: uncharacterized protein (211 aa).

Residues A155–S211 are disordered. Acidic residues predominate over residues T178–D188. The span at S195–S211 shows a compositional bias: low complexity.

This is an uncharacterized protein from Schizosaccharomyces pombe (strain 972 / ATCC 24843) (Fission yeast).